Consider the following 133-residue polypeptide: Fluoride-specific ion channel FluC (133 aa).

4 consecutive transmembrane segments (helical) span residues 12–32 (LAMTGGALGSGLRFAIGASLI), 41–61 (WGTLTVNLLGSFVAGVLLVWL), 76–96 (IVGVIGGLTTFSSLMMECLVF), and 104–124 (MIGIYLAVTLLAGLALVFAGA). Residues G81 and T84 each coordinate Na(+).

It belongs to the fluoride channel Fluc/FEX (TC 1.A.43) family.

The protein localises to the cell inner membrane. The enzyme catalyses fluoride(in) = fluoride(out). Its activity is regulated as follows. Na(+) is not transported, but it plays an essential structural role and its presence is essential for fluoride channel function. In terms of biological role, fluoride-specific ion channel. Important for reducing fluoride concentration in the cell, thus reducing its toxicity. In Xanthomonas axonopodis pv. citri (strain 306), this protein is Fluoride-specific ion channel FluC.